The following is a 66-amino-acid chain: Large ribosomal subunit protein bL31 (66 aa).

Residues Cys-16, Cys-18, Cys-36, and Cys-39 each coordinate Zn(2+).

It belongs to the bacterial ribosomal protein bL31 family. Type A subfamily. In terms of assembly, part of the 50S ribosomal subunit. Zn(2+) serves as cofactor.

Functionally, binds the 23S rRNA. The polypeptide is Large ribosomal subunit protein bL31 (Nitratiruptor sp. (strain SB155-2)).